The primary structure comprises 189 residues: Potassium-transporting ATPase KdpC subunit (189 aa).

A helical membrane pass occupies residues 5 to 25 (LLPALTMLLVFTVITGIVYPL).

The protein belongs to the KdpC family. In terms of assembly, the system is composed of three essential subunits: KdpA, KdpB and KdpC.

It is found in the cell membrane. Its function is as follows. Part of the high-affinity ATP-driven potassium transport (or Kdp) system, which catalyzes the hydrolysis of ATP coupled with the electrogenic transport of potassium into the cytoplasm. This subunit acts as a catalytic chaperone that increases the ATP-binding affinity of the ATP-hydrolyzing subunit KdpB by the formation of a transient KdpB/KdpC/ATP ternary complex. The sequence is that of Potassium-transporting ATPase KdpC subunit from Mycobacterium bovis (strain ATCC BAA-935 / AF2122/97).